The following is a 354-amino-acid chain: Dihydroorotate dehydrogenase (quinone) (354 aa).

Residues 61–65 (AGYDK) and alanine 85 contribute to the FMN site. Residue lysine 65 coordinates substrate. 110 to 114 (NRFGF) serves as a coordination point for substrate. The FMN site is built by asparagine 139 and asparagine 170. Residue asparagine 170 coordinates substrate. The active-site Nucleophile is serine 173. Asparagine 175 provides a ligand contact to substrate. FMN contacts are provided by lysine 211 and threonine 239. 240-241 (NT) provides a ligand contact to substrate. FMN-binding positions include glycine 261, glycine 290, and 311-312 (YT).

Belongs to the dihydroorotate dehydrogenase family. Type 2 subfamily. As to quaternary structure, monomer. FMN is required as a cofactor.

Its subcellular location is the cell membrane. It carries out the reaction (S)-dihydroorotate + a quinone = orotate + a quinol. Its pathway is pyrimidine metabolism; UMP biosynthesis via de novo pathway; orotate from (S)-dihydroorotate (quinone route): step 1/1. Its function is as follows. Catalyzes the conversion of dihydroorotate to orotate with quinone as electron acceptor. The protein is Dihydroorotate dehydrogenase (quinone) of Cereibacter sphaeroides (strain ATCC 17023 / DSM 158 / JCM 6121 / CCUG 31486 / LMG 2827 / NBRC 12203 / NCIMB 8253 / ATH 2.4.1.) (Rhodobacter sphaeroides).